A 286-amino-acid chain; its full sequence is MSKDNLHRYLFENADVRGELVQLEQSYQEILSAHTYPTQIQELLGELMAATSLLTATLKFSGDISVQLQGDGPISLAVINGNNLQQLRGVARWDGELSDGATLQQLFGKGHMVITLTPAKGERYQGVVALDKDSLAACLEEYFTQSEQLPTKISLFANGKQAAGMLLQVLPSEGDHNAEFEHLEQLTATVKAEELFELEAEEVLHRLYHQEEVRLFDPIEVTFSCTCSRERSASAIRTVSKAEIDTIIAEQGKIEMGCEYCNTTYDFDSIDVEAIFSNTQAPETKQ.

2 cysteine pairs are disulfide-bonded: Cys225–Cys227 and Cys258–Cys261.

The protein belongs to the HSP33 family. Under oxidizing conditions two disulfide bonds are formed involving the reactive cysteines. Under reducing conditions zinc is bound to the reactive cysteines and the protein is inactive.

The protein localises to the cytoplasm. Its function is as follows. Redox regulated molecular chaperone. Protects both thermally unfolding and oxidatively damaged proteins from irreversible aggregation. Plays an important role in the bacterial defense system toward oxidative stress. The sequence is that of 33 kDa chaperonin from Shewanella sediminis (strain HAW-EB3).